The sequence spans 456 residues: Methylenetetrahydrofolate--tRNA-(uracil-5-)-methyltransferase TrmFO (456 aa).

11-16 lines the FAD pocket; sequence GAGLAG.

It belongs to the MnmG family. TrmFO subfamily. It depends on FAD as a cofactor.

It localises to the cytoplasm. It catalyses the reaction uridine(54) in tRNA + (6R)-5,10-methylene-5,6,7,8-tetrahydrofolate + NADH + H(+) = 5-methyluridine(54) in tRNA + (6S)-5,6,7,8-tetrahydrofolate + NAD(+). It carries out the reaction uridine(54) in tRNA + (6R)-5,10-methylene-5,6,7,8-tetrahydrofolate + NADPH + H(+) = 5-methyluridine(54) in tRNA + (6S)-5,6,7,8-tetrahydrofolate + NADP(+). In terms of biological role, catalyzes the folate-dependent formation of 5-methyl-uridine at position 54 (M-5-U54) in all tRNAs. In Synechococcus sp. (strain CC9605), this protein is Methylenetetrahydrofolate--tRNA-(uracil-5-)-methyltransferase TrmFO.